A 360-amino-acid chain; its full sequence is Heme A synthase (360 aa).

Helical transmembrane passes span 29–49, 111–131, 139–159, 175–195, 210–230, 242–262, 269–289, 309–329, and 330–350; these read WLFA…ATRL, FLGR…WWTG, LGLL…WIMV, LAAH…LAAG, LTAL…GLVA, PLMD…TPWI, VALV…VAAL, AILG…LLAV, and PLWA…MAAV. His276 provides a ligand contact to heme. His337 lines the heme pocket.

This sequence belongs to the COX15/CtaA family. Type 2 subfamily. As to quaternary structure, interacts with CtaB. Heme b serves as cofactor.

It is found in the cell membrane. It carries out the reaction Fe(II)-heme o + 2 A + H2O = Fe(II)-heme a + 2 AH2. It participates in porphyrin-containing compound metabolism; heme A biosynthesis; heme A from heme O: step 1/1. Its function is as follows. Catalyzes the conversion of heme O to heme A by two successive hydroxylations of the methyl group at C8. The first hydroxylation forms heme I, the second hydroxylation results in an unstable dihydroxymethyl group, which spontaneously dehydrates, resulting in the formyl group of heme A. The polypeptide is Heme A synthase (Methylobacterium nodulans (strain LMG 21967 / CNCM I-2342 / ORS 2060)).